The sequence spans 2234 residues: RNA-directed RNA polymerase L (2234 aa).

The endonuclease stretch occupies residues 26–283; that stretch reads ITVVTSQTEM…INLSDEKLSC (258 aa). Positions 51, 89, and 102 each coordinate Mn(2+). Lys-115 is an active-site residue. The span at 879 to 891 shows a compositional bias: basic and acidic residues; the sequence is KRDDHMKDSEDSK. Disordered regions lie at residues 879 to 898 and 927 to 949; these read KRDDHMKDSEDSKQNLSSDL and KLKEKTEARQSSSGSSLKNQQKR. Positions 935–945 are enriched in polar residues; that stretch reads RQSSSGSSLKN. The RdRp catalytic domain occupies 1184-1383; the sequence is MEMKMSVNLG…FISSKFNKFV (200 aa). Asp-1342 lines the Mg(2+) pocket.

It belongs to the Bunyavirales RNA polymerase family. As to quaternary structure, homomultimer; the oligomeric structure is essential for the polymerase activity. Interacts with nucleoprotein N. Interacts with protein Z; this interaction inhibits viral transcription and replication, Z partially blocks the product exit tunnel for the releasing nascent RNA product. Mn(2+) serves as cofactor. The cofactor is Mg(2+).

It is found in the virion. The protein localises to the host cytoplasm. It catalyses the reaction RNA(n) + a ribonucleoside 5'-triphosphate = RNA(n+1) + diphosphate. RNA-dependent RNA polymerase, which is responsible for the replication and transcription of the viral RNA genome using antigenomic RNA as an intermediate. During transcription, synthesizes subgenomic RNAs and assures their capping by a cap-snatching mechanism, which involves the endonuclease activity cleaving the host capped pre-mRNAs. These short capped RNAs are then used as primers for viral transcription. The 3'-end of subgenomic mRNAs molecules are heterogeneous and not polyadenylated. The replicase function is to direct synthesis of antigenomic and genomic RNA which are encapsidated and non capped. As a consequence of the use of the same enzyme for both transcription and replication, these mechanisms need to be well coordinated. These processes may be regulated by proteins N and Z in a dose-dependent manner. Z protein inhibits the viral polymerase L und thus the viral transcription and RNA synthesis. The sequence is that of RNA-directed RNA polymerase L from Bolomys (OLVV).